Consider the following 281-residue polypeptide: 3-mercaptopyruvate sulfurtransferase (281 aa).

2 consecutive Rhodanese domains span residues 17-135 (DDPE…LLEE) and 165-278 (HENT…LPVE). A substrate-binding site is contributed by Arg-179. Cys-238 acts as the Cysteine persulfide intermediate in catalysis. Positions 238–244 (CGSGVTA) are substrate specificity.

Its subcellular location is the cytoplasm. It carries out the reaction 2-oxo-3-sulfanylpropanoate + [thioredoxin]-dithiol = [thioredoxin]-disulfide + hydrogen sulfide + pyruvate + H(+). In terms of biological role, catalyzes the transfer of sulfur from 3-mercaptopyruvate to a thiol-containing acceptor to form an intramolecular disulfide releasing hydrogen sulfide and pyruvate. This chain is 3-mercaptopyruvate sulfurtransferase (sseA), found in Escherichia coli O157:H7.